A 346-amino-acid chain; its full sequence is MGRGLHVAVVGATGAVGQQMLKTLEDRNFEMDTLTLLSSKRSAGTKVTFKGQELTVQEASPESFEGVNIALFSAGGSVSQALAPEAVKRGAIVIDNTSAFRMDENTPLVVPEVNEADLHEHNGIIANPNCSTIQMVAALEPIRKAYGLNKVIVSTYQAVSGAGNEAVKELYSQTQAILNKEEIEPEIMPVKGDKKHYQIAFNAIPQIDKFQDNGYTFEEMKMINETKKIMHMPDLQVAATCVRLPIQTGHSESVYIEIDRDDATVEDIKNLLKEAPGVTLQDDPSQQLYPMPADAVGKNDVFVGRIRKDLDRANGFHLWVVSDNLLKGAAWNSVQIAESLKKLNLV.

Residues 13-16 (TGAV) and 41-42 (RS) contribute to the NADP(+) site. A Phosphoserine modification is found at serine 98. Position 101 (arginine 101) interacts with phosphate. Residue cysteine 130 is the Acyl-thioester intermediate of the active site. Tyrosine 146 bears the Phosphotyrosine mark. Substrate is bound at residue glutamine 157. 160–161 (SG) contacts NADP(+). Lysine 221 lines the phosphate pocket. Arginine 243 is a substrate binding site. The Proton acceptor role is filled by histidine 250. Asparagine 324 provides a ligand contact to NADP(+).

It belongs to the aspartate-semialdehyde dehydrogenase family. In terms of assembly, homodimer.

The catalysed reaction is L-aspartate 4-semialdehyde + phosphate + NADP(+) = 4-phospho-L-aspartate + NADPH + H(+). Its pathway is amino-acid biosynthesis; L-lysine biosynthesis via DAP pathway; (S)-tetrahydrodipicolinate from L-aspartate: step 2/4. It participates in amino-acid biosynthesis; L-methionine biosynthesis via de novo pathway; L-homoserine from L-aspartate: step 2/3. The protein operates within amino-acid biosynthesis; L-threonine biosynthesis; L-threonine from L-aspartate: step 2/5. Its function is as follows. Catalyzes the NADPH-dependent formation of L-aspartate-semialdehyde (L-ASA) by the reductive dephosphorylation of L-aspartyl-4-phosphate. This Bacillus subtilis (strain 168) protein is Aspartate-semialdehyde dehydrogenase.